A 2049-amino-acid polypeptide reads, in one-letter code: Kinetochore-associated protein rod-1 (2049 aa).

As to quaternary structure, component of the RZZ complex composed of rod-1, czw-1 and zwl-1. Interacts (via N-terminus) with NDC80 complex component ndc-80.

It is found in the chromosome. The protein resides in the centromere. Its subcellular location is the kinetochore. The protein localises to the cytoplasm. It localises to the cytoskeleton. It is found in the spindle. Its function is as follows. Essential component of the mitotic checkpoint, which prevents cells from prematurely exiting mitosis. Required for chromosome segregation, the assembly of the dynein-dynactin and mdf-1-mdf-2 complexes onto kinetochores and spindle pole separation. Plays a role in nuclear envelope breakdown. Its function related to the spindle assembly machinery and kinetochore-microtubule attachments likely depends on its association in the mitotic RZZ complex. The RZZ complex recruits the spindly-like protein spdl-1 to kinetochores. To prevent irregular chromosome segregation, the complex also inhibits the attachment of the kinetochore-associated NDC80 complex to microtubules. The recruitment of spdl-1 to kinetochores relieves this inhibition. Required for embryonic development. The protein is Kinetochore-associated protein rod-1 of Caenorhabditis elegans.